A 495-amino-acid polypeptide reads, in one-letter code: Trigger factor (495 aa).

Residues 169-254 (GDRVTIDYLG…VKEVAAPGEV (86 aa)) form the PPIase FKBP-type domain. The segment at 439–495 (ALLADDESEDKPAAKKAAPKKKAAKAEATEAAAEGEEAAVPKKKAAPKKKAAEDSAE) is disordered.

It belongs to the FKBP-type PPIase family. Tig subfamily.

It localises to the cytoplasm. The catalysed reaction is [protein]-peptidylproline (omega=180) = [protein]-peptidylproline (omega=0). In terms of biological role, involved in protein export. Acts as a chaperone by maintaining the newly synthesized protein in an open conformation. Functions as a peptidyl-prolyl cis-trans isomerase. The protein is Trigger factor of Rhizobium rhizogenes (strain K84 / ATCC BAA-868) (Agrobacterium radiobacter).